Consider the following 107-residue polypeptide: Nucleoid-associated protein GDI3467/Gdia_2910 (107 aa).

It belongs to the YbaB/EbfC family. As to quaternary structure, homodimer.

The protein localises to the cytoplasm. The protein resides in the nucleoid. Its function is as follows. Binds to DNA and alters its conformation. May be involved in regulation of gene expression, nucleoid organization and DNA protection. In Gluconacetobacter diazotrophicus (strain ATCC 49037 / DSM 5601 / CCUG 37298 / CIP 103539 / LMG 7603 / PAl5), this protein is Nucleoid-associated protein GDI3467/Gdia_2910.